We begin with the raw amino-acid sequence, 68 residues long: Antimicrobial peptide VpCT3 (68 aa).

A signal peptide spans 1–23 (MKTQIVILIVAVLVLQLVSQSDA). Leu-36 is subject to Leucine amide. A propeptide spanning residues 37–68 (GKRGLKNLDQYNDLFDGEISDADIKFLQDLMR) is cleaved from the precursor.

It belongs to the non-disulfide-bridged peptide (NDBP) superfamily. Short antimicrobial peptide (group 4) family. In terms of tissue distribution, expressed by the venom gland.

It is found in the secreted. Its subcellular location is the target cell membrane. Antimicrobial peptide with weak activity against all bacteria tested (MIC&gt;100 uM) and all yeasts tested (MIC&gt;200 uM). Also provokes weak hemolysis on human erythrocytes (HC(50)=83.7 uM). This is Antimicrobial peptide VpCT3 from Mesomexovis punctatus (Scorpion).